The sequence spans 139 residues: MATNRTFTMIKPDAVANGHIGNILAMITNGGFKIVSLKLTQLTVADAKAFYAVHAERPFYGELVEFMSRGPIVAAILEKDNAVEDFRTLIGATNPAEAAEGTIRKAYATSIGENAVHGSDSDENAAIESAFHFAGREQF.

6 residues coordinate ATP: K11, F59, R87, T93, R104, and N114. Residue H117 is the Pros-phosphohistidine intermediate of the active site.

Belongs to the NDK family. In terms of assembly, homotetramer. Mg(2+) serves as cofactor.

It is found in the cytoplasm. The enzyme catalyses a 2'-deoxyribonucleoside 5'-diphosphate + ATP = a 2'-deoxyribonucleoside 5'-triphosphate + ADP. It carries out the reaction a ribonucleoside 5'-diphosphate + ATP = a ribonucleoside 5'-triphosphate + ADP. Functionally, major role in the synthesis of nucleoside triphosphates other than ATP. The ATP gamma phosphate is transferred to the NDP beta phosphate via a ping-pong mechanism, using a phosphorylated active-site intermediate. This Flavobacterium johnsoniae (strain ATCC 17061 / DSM 2064 / JCM 8514 / BCRC 14874 / CCUG 350202 / NBRC 14942 / NCIMB 11054 / UW101) (Cytophaga johnsonae) protein is Nucleoside diphosphate kinase.